A 48-amino-acid polypeptide reads, in one-letter code: Bacteriochlorophyll c-binding protein (48 aa).

Histidine 25 contributes to the a bacteriochlorophyll c binding site.

This sequence belongs to the BChl C/E-binding protein family.

The protein localises to the chlorosome. Its subcellular location is the chlorosome envelope. Functionally, component of the photosynthetic apparatus. The light harvesting B740 complex binds bacteriochlorophyll c. The sequence is that of Bacteriochlorophyll c-binding protein (csmA) from Chlorobaculum thiosulfatiphilum (Chlorobium limicola f.sp. thiosulfatophilum).